The following is a 351-amino-acid chain: Quinolinate phosphoribosyltransferase [decarboxylating] 2b, mitochondrial (351 aa).

Substrate is bound by residues arginine 142, 173–175 (TRK), arginine 197, lysine 207, glutamate 240, aspartate 267, 299–301 (SGN), and 320–322 (SGA).

It belongs to the NadC/ModD family. In terms of tissue distribution, expressed in roots and flowers.

It is found in the mitochondrion. It carries out the reaction nicotinate beta-D-ribonucleotide + CO2 + diphosphate = quinolinate + 5-phospho-alpha-D-ribose 1-diphosphate + 2 H(+). The protein operates within alkaloid biosynthesis; nicotine biosynthesis. Its pathway is cofactor biosynthesis; NAD(+) biosynthesis; nicotinate D-ribonucleotide from quinolinate: step 1/1. In terms of biological role, involved in the biosynthesis of pyridine alkaloid natural products, leading mainly to the production of anabasine, anatabine, nicotine and nornicotine, effective deterrents against herbivores with antiparasitic and pesticide properties (neurotoxins); nornicotine serves as the precursor in the synthesis of the carcinogen compound N'-nitrosonornicotine (NNN). Involved in the catabolism of quinolinic acid (QA). In Nicotiana tabacum (Common tobacco), this protein is Quinolinate phosphoribosyltransferase [decarboxylating] 2b, mitochondrial.